Here is a 255-residue protein sequence, read N- to C-terminus: D-aminoacyl-tRNA deacylase (255 aa).

This sequence belongs to the DtdA deacylase family. As to quaternary structure, monomer. It depends on Zn(2+) as a cofactor.

The catalysed reaction is a D-aminoacyl-tRNA + H2O = a tRNA + a D-alpha-amino acid + H(+). It carries out the reaction glycyl-tRNA(Ala) + H2O = tRNA(Ala) + glycine + H(+). In terms of biological role, D-aminoacyl-tRNA deacylase with broad substrate specificity. By recycling D-aminoacyl-tRNA to D-amino acids and free tRNA molecules, this enzyme counteracts the toxicity associated with the formation of D-aminoacyl-tRNA entities in vivo. This chain is D-aminoacyl-tRNA deacylase, found in Picrophilus torridus (strain ATCC 700027 / DSM 9790 / JCM 10055 / NBRC 100828 / KAW 2/3).